The sequence spans 545 residues: Coiled-coil domain-containing protein 60 (545 aa).

Residues 72–99 (NILREENAMKKKQQLLQKLKEEELNKFQ) are a coiled coil. Residues 224-284 (PAIRTAMASR…DNESSSTKPE (61 aa)) are disordered. Low complexity predominate over residues 238 to 259 (RGSTLSLTRTSGGSSPQSSMMS).

This chain is Coiled-coil domain-containing protein 60 (Ccdc60), found in Mus musculus (Mouse).